We begin with the raw amino-acid sequence, 155 residues long: Transcriptional regulator MraZ (155 aa).

SpoVT-AbrB domains are found at residues 15 to 62 (TYEN…GMDR) and 93 to 136 (SEEL…NPTA).

This sequence belongs to the MraZ family. Forms oligomers.

Its subcellular location is the cytoplasm. The protein localises to the nucleoid. In Rhodospirillum rubrum (strain ATCC 11170 / ATH 1.1.1 / DSM 467 / LMG 4362 / NCIMB 8255 / S1), this protein is Transcriptional regulator MraZ.